Consider the following 37-residue polypeptide: Large ribosomal subunit protein bL36c (37 aa).

The protein belongs to the bacterial ribosomal protein bL36 family.

The protein localises to the plastid. Its subcellular location is the chloroplast. This Tupiella akineta (Green alga) protein is Large ribosomal subunit protein bL36c.